A 156-amino-acid chain; its full sequence is UPF0756 membrane protein Exig_2210 (156 aa).

5 consecutive transmembrane segments (helical) span residues 5–25 (LFLI…LIIA), 52–72 (WGVT…DIGF), 83–103 (IGII…HGVG), 109–129 (PLVT…FRGV), and 131–151 (VGPL…DIIV).

The protein belongs to the UPF0756 family.

The protein resides in the cell membrane. This Exiguobacterium sibiricum (strain DSM 17290 / CCUG 55495 / CIP 109462 / JCM 13490 / 255-15) protein is UPF0756 membrane protein Exig_2210.